A 299-amino-acid chain; its full sequence is 4-hydroxybenzoate octaprenyltransferase (299 aa).

7 helical membrane-spanning segments follow: residues 31–51 (IGIY…ADGL), 54–74 (WDVL…GCVI), 105–125 (VLFF…TNPL), 148–168 (QLPQ…AFAA), 177–197 (IWVL…FYAM), 241–261 (FGLG…FAYQ), and 277–297 (FLHN…DKLI).

It belongs to the UbiA prenyltransferase family. It depends on Mg(2+) as a cofactor.

The protein resides in the cell inner membrane. The catalysed reaction is all-trans-octaprenyl diphosphate + 4-hydroxybenzoate = 4-hydroxy-3-(all-trans-octaprenyl)benzoate + diphosphate. It participates in cofactor biosynthesis; ubiquinone biosynthesis. In terms of biological role, catalyzes the prenylation of para-hydroxybenzoate (PHB) with an all-trans polyprenyl group. Mediates the second step in the final reaction sequence of ubiquinone-8 (UQ-8) biosynthesis, which is the condensation of the polyisoprenoid side chain with PHB, generating the first membrane-bound Q intermediate 3-octaprenyl-4-hydroxybenzoate. The polypeptide is 4-hydroxybenzoate octaprenyltransferase (Saccharophagus degradans (strain 2-40 / ATCC 43961 / DSM 17024)).